The following is a 212-amino-acid chain: Thymidylate kinase (212 aa).

11–18 (GPEGAGKT) lines the ATP pocket.

The protein belongs to the thymidylate kinase family.

It catalyses the reaction dTMP + ATP = dTDP + ADP. Phosphorylation of dTMP to form dTDP in both de novo and salvage pathways of dTTP synthesis. The polypeptide is Thymidylate kinase (Streptococcus pneumoniae (strain CGSP14)).